We begin with the raw amino-acid sequence, 339 residues long: Large ribosomal subunit protein uL10 (339 aa).

Residues 305 to 339 (TQPQQEEKVEEAEEEEEEEEASEEDALAGLGALFG) form a disordered region. The segment covering 312–330 (KVEEAEEEEEEEEASEEDA) has biased composition (acidic residues).

The protein belongs to the universal ribosomal protein uL10 family. Part of the 50S ribosomal subunit. Forms part of the ribosomal stalk which helps the ribosome interact with GTP-bound translation factors. Forms a heptameric L10(L12)2(L12)2(L12)2 complex, where L10 forms an elongated spine to which the L12 dimers bind in a sequential fashion.

Its function is as follows. Forms part of the ribosomal stalk, playing a central role in the interaction of the ribosome with GTP-bound translation factors. This Thermococcus onnurineus (strain NA1) protein is Large ribosomal subunit protein uL10.